The primary structure comprises 568 residues: Glucose-6-phosphate isomerase, cytosolic 1 (568 aa).

The active-site Proton donor is glutamate 360. Catalysis depends on residues histidine 391 and lysine 516.

It belongs to the GPI family. In terms of assembly, homodimer.

It is found in the cytoplasm. The catalysed reaction is alpha-D-glucose 6-phosphate = beta-D-fructose 6-phosphate. Its pathway is carbohydrate degradation; glycolysis; D-glyceraldehyde 3-phosphate and glycerone phosphate from D-glucose: step 2/4. This chain is Glucose-6-phosphate isomerase, cytosolic 1 (PGIC1), found in Clarkia xantiana (Gunsight clarkia).